The primary structure comprises 151 residues: Cytochrome c oxidase-assembly factor COX23, mitochondrial (151 aa).

Residues 1 to 10 (MEKPSPTRRQ) constitute a mitochondrion transit peptide. The disordered stretch occupies residues 1 to 86 (MEKPSPTRRQ…QYYPDDPENP (86 aa)). Over residues 7–18 (TRRQTSSLSTIS) the composition is skewed to polar residues. Over residues 19-51 (NGMTMTNDNRDTTNTNSGSTSSNNSQPSSSSTP) the composition is skewed to low complexity. Residues 101–143 (YDPCEESSKLSFQCLERNDYDRSKCQEYFDAYRECKKQWLTAR) enclose the CHCH domain. Short sequence motifs (cx9C motif) lie at residues 104-114 (CEESSKLSFQC) and 125-135 (CQEYFDAYREC). Intrachain disulfides connect cysteine 104–cysteine 135 and cysteine 114–cysteine 125.

The protein belongs to the COX23 family.

The protein localises to the cytoplasm. The protein resides in the mitochondrion intermembrane space. Required for the assembly of cytochrome c oxidase. This Saccharomyces cerevisiae (strain ATCC 204508 / S288c) (Baker's yeast) protein is Cytochrome c oxidase-assembly factor COX23, mitochondrial (COX23).